Here is a 1067-residue protein sequence, read N- to C-terminus: Kinesin-like protein KIF11-A (1067 aa).

In terms of domain architecture, Kinesin motor spans 18–359 (NIQVVVRCRP…LDYASRAKNI (342 aa)). Residue 105 to 112 (GQTGTGKT) participates in ATP binding. 3 coiled-coil regions span residues 365–480 (VNQK…QEAF), 692–721 (DSSSALSSIQSEYESLKEEIATAQSTHSEG), and 882–915 (QAQEKALTSLVEQVKDDKEMLGEQRLELNEQVQS). At T937 the chain carries Phosphothreonine; by CDK1. Residue S1046 is modified to Phosphoserine; by NEK6.

Belongs to the TRAFAC class myosin-kinesin ATPase superfamily. Kinesin family. BimC subfamily. As to quaternary structure, heterotetramer of two heavy and two light chains. Interacts with aurka. Post-translationally, phosphorylation of Thr-937 during mitosis controls the association of this protein with the spindle apparatus. In terms of processing, a subset of this protein primarily localized at the spindle pole is phosphorylated by NEK6 during mitosis. Phosphorylated on a serine residue by aurka. As to expression, highly expressed in unfertilized eggs, especially in the germinal vesicle and in the radial yolk-poor channels. Also present in testis.

It is found in the cytoplasm. The protein localises to the cytoskeleton. Its subcellular location is the spindle pole. Plus end-directed motor protein required for establishing a bipolar spindle. Associates with both interphase and spindle microtubules. May be involved in nuclear divisions taking place during the development of unfertilized eggs. Required in non-mitotic cells for transport of secretory proteins from the Golgi complex to the cell surface. The protein is Kinesin-like protein KIF11-A (kif11-a) of Xenopus laevis (African clawed frog).